A 103-amino-acid polypeptide reads, in one-letter code: Co-chaperonin GroES (103 aa).

Belongs to the GroES chaperonin family. As to quaternary structure, heptamer of 7 subunits arranged in a ring. Interacts with the chaperonin GroEL.

Its subcellular location is the cytoplasm. Together with the chaperonin GroEL, plays an essential role in assisting protein folding. The GroEL-GroES system forms a nano-cage that allows encapsulation of the non-native substrate proteins and provides a physical environment optimized to promote and accelerate protein folding. GroES binds to the apical surface of the GroEL ring, thereby capping the opening of the GroEL channel. The protein is Co-chaperonin GroES of Thermosynechococcus vestitus (strain NIES-2133 / IAM M-273 / BP-1).